Here is a 35-residue protein sequence, read N- to C-terminus: Putative gastric cancer-related gene 224 protein (35 aa).

In terms of tissue distribution, expressed in gastric mucosa.

The protein is Putative gastric cancer-related gene 224 protein (GCRG224) of Homo sapiens (Human).